Reading from the N-terminus, the 226-residue chain is UPF0758 protein SPT_1135 (226 aa).

The region spanning S103–L225 is the MPN domain. H174, H176, and D187 together coordinate Zn(2+). The JAMM motif motif lies at H174–D187.

The protein belongs to the UPF0758 family.

In Streptococcus pneumoniae (strain Taiwan19F-14), this protein is UPF0758 protein SPT_1135.